Reading from the N-terminus, the 245-residue chain is Ubiquinone/menaquinone biosynthesis C-methyltransferase UbiE (245 aa).

Residues T71, D92, and 118–119 (DA) each bind S-adenosyl-L-methionine.

It belongs to the class I-like SAM-binding methyltransferase superfamily. MenG/UbiE family.

The enzyme catalyses a 2-demethylmenaquinol + S-adenosyl-L-methionine = a menaquinol + S-adenosyl-L-homocysteine + H(+). It catalyses the reaction a 2-methoxy-6-(all-trans-polyprenyl)benzene-1,4-diol + S-adenosyl-L-methionine = a 5-methoxy-2-methyl-3-(all-trans-polyprenyl)benzene-1,4-diol + S-adenosyl-L-homocysteine + H(+). It participates in quinol/quinone metabolism; menaquinone biosynthesis; menaquinol from 1,4-dihydroxy-2-naphthoate: step 2/2. The protein operates within cofactor biosynthesis; ubiquinone biosynthesis. Its function is as follows. Methyltransferase required for the conversion of demethylmenaquinol (DMKH2) to menaquinol (MKH2) and the conversion of 2-polyprenyl-6-methoxy-1,4-benzoquinol (DDMQH2) to 2-polyprenyl-3-methyl-6-methoxy-1,4-benzoquinol (DMQH2). This chain is Ubiquinone/menaquinone biosynthesis C-methyltransferase UbiE, found in Neisseria meningitidis serogroup C / serotype 2a (strain ATCC 700532 / DSM 15464 / FAM18).